We begin with the raw amino-acid sequence, 277 residues long: Photosystem I assembly factor PSA3, chloroplastic (277 aa).

A chloroplast-targeting transit peptide spans 1–45; the sequence is MVVVTHISTSFHQISPSFFHLRLRNPSTTSSSRPKLDGGFALSIR.

As to quaternary structure, interacts with PYG7.

It is found in the plastid. The protein localises to the chloroplast. It localises to the chloroplast thylakoid membrane. Nuclear genome-encoded factor required for the accumulation of photosystem I (PSI). Functions as a PSI biogenesis factor. Cooperates with PYG7 to promote the stable assembly of PSI in the thylakoid membrane. May target primarily the PsaC subunit. Does not seem to be required for the expression of chloroplast genes encoding PSI subunits. The polypeptide is Photosystem I assembly factor PSA3, chloroplastic (Arabidopsis thaliana (Mouse-ear cress)).